Reading from the N-terminus, the 902-residue chain is Protein NrfI (902 aa).

Transmembrane regions (helical) follow at residues 9–29 (YITL…ATFI), 75–95 (FLFH…RYLG), 300–320 (VTYL…LDPT), 335–355 (LSLL…YAQS), 602–622 (LVLG…PPLA), 659–679 (DTYE…LLFF), 731–751 (SYGF…LFIL), 772–792 (VSLI…GIWA), 832–852 (YLFS…YFGV), and 868–888 (LPIP…SLIA).

The protein in the C-terminal section; belongs to the CcmF/CycK/Ccl1/NrfE/CcsA family.

It is found in the cell membrane. Functionally, may play a role in cytochrome c biogenesis and may be required for maturation of the NrfA protein. The sequence is that of Protein NrfI (nrfI) from Wolinella succinogenes (strain ATCC 29543 / DSM 1740 / CCUG 13145 / JCM 31913 / LMG 7466 / NCTC 11488 / FDC 602W) (Vibrio succinogenes).